A 234-amino-acid polypeptide reads, in one-letter code: BTB/POZ domain-containing protein KCTD5 (234 aa).

At alanine 2 the chain carries N-acetylalanine. One can recognise a BTB domain in the interval 44-146; it reads KWVRLNVGGT…LVKDKIRERD (103 aa). Residues 211–234 are disordered; sequence NSPHGPASEPSEKAKILQERGSRM. The span at 220–234 shows a compositional bias: basic and acidic residues; sequence PSEKAKILQERGSRM.

Homopentamer. Interacts (via C-terminus) with GRASP55/GORASP2. Interacts with CUL3 and with ubiquitinated proteins. Interacts with CRY1.

Its subcellular location is the cytoplasm. It localises to the cytosol. The protein resides in the nucleus. Its interaction with CUL3 suggests that it may act as a substrate adapter in some E3 ligase complex. Does not affect the function of Kv channel Kv2.1/KCNB1, Kv1.2/KCNA2, Kv4.2/KCND2 and Kv3.4/KCNC4. The polypeptide is BTB/POZ domain-containing protein KCTD5 (KCTD5) (Bos taurus (Bovine)).